The chain runs to 323 residues: Lipoyl synthase (323 aa).

[4Fe-4S] cluster is bound by residues cysteine 61, cysteine 66, cysteine 72, cysteine 87, cysteine 91, cysteine 94, and serine 300. In terms of domain architecture, Radical SAM core spans 73 to 289 (WDKKHATFMI…ETVAYTKGFL (217 aa)).

It belongs to the radical SAM superfamily. Lipoyl synthase family. Requires [4Fe-4S] cluster as cofactor.

The protein resides in the cytoplasm. It carries out the reaction [[Fe-S] cluster scaffold protein carrying a second [4Fe-4S](2+) cluster] + N(6)-octanoyl-L-lysyl-[protein] + 2 oxidized [2Fe-2S]-[ferredoxin] + 2 S-adenosyl-L-methionine + 4 H(+) = [[Fe-S] cluster scaffold protein] + N(6)-[(R)-dihydrolipoyl]-L-lysyl-[protein] + 4 Fe(3+) + 2 hydrogen sulfide + 2 5'-deoxyadenosine + 2 L-methionine + 2 reduced [2Fe-2S]-[ferredoxin]. Its pathway is protein modification; protein lipoylation via endogenous pathway; protein N(6)-(lipoyl)lysine from octanoyl-[acyl-carrier-protein]: step 2/2. In terms of biological role, catalyzes the radical-mediated insertion of two sulfur atoms into the C-6 and C-8 positions of the octanoyl moiety bound to the lipoyl domains of lipoate-dependent enzymes, thereby converting the octanoylated domains into lipoylated derivatives. This Sinorhizobium medicae (strain WSM419) (Ensifer medicae) protein is Lipoyl synthase.